A 132-amino-acid polypeptide reads, in one-letter code: Large ribosomal subunit protein uL14 (132 aa).

This sequence belongs to the universal ribosomal protein uL14 family. In terms of assembly, part of the 50S ribosomal subunit. Forms a cluster with proteins L3 and L24e, part of which may contact the 16S rRNA in 2 intersubunit bridges.

In terms of biological role, binds to 23S rRNA. Forms part of two intersubunit bridges in the 70S ribosome. The protein is Large ribosomal subunit protein uL14 of Thermoplasma acidophilum (strain ATCC 25905 / DSM 1728 / JCM 9062 / NBRC 15155 / AMRC-C165).